The following is a 138-amino-acid chain: MRTLWIVAVCLMGVEGHLTQFGDMINKKTGTFGLLSYVYYGCYCGLGGKGKPQDATDRCCFVHDCCYGTVNGCDPKLSTYSYSFQNGDIVCGDDDPCLRAVCECDRVAAICFGENMNTYDKKYMLYSLFDCMEESEKC.

Positions 1-16 are cleaved as a signal peptide; it reads MRTLWIVAVCLMGVEG. 7 cysteine pairs are disulfide-bonded: cysteine 42/cysteine 131, cysteine 44/cysteine 60, cysteine 59/cysteine 111, cysteine 65/cysteine 138, cysteine 66/cysteine 104, cysteine 73/cysteine 97, and cysteine 91/cysteine 102. Ca(2+) contacts are provided by tyrosine 43, glycine 45, and glycine 47. Histidine 63 is an active-site residue. Aspartate 64 serves as a coordination point for Ca(2+). The May inhibit integrin function (Atypical cell attachment site) motif lies at 86-88; it reads NGD. Residue aspartate 105 is part of the active site.

Belongs to the phospholipase A2 family. Group II subfamily. D49 sub-subfamily. Ca(2+) serves as cofactor. As to expression, expressed by the venom gland.

It localises to the secreted. It carries out the reaction a 1,2-diacyl-sn-glycero-3-phosphocholine + H2O = a 1-acyl-sn-glycero-3-phosphocholine + a fatty acid + H(+). Snake venom phospholipase A2 (PLA2) that displays an inhibitory effect, independent from its catalytic activity, on tumor cell adhesion and migration. This effect is mediated via specific inhibition of integrins alpha-5/beta-1 (ITGA5/ITGB1), alpha-v/beta-3 (ITGAV/ITGB3) and alpha-v/beta-6 (ITGAV/ITGB6). PLA2 catalyzes the calcium-dependent hydrolysis of the 2-acyl groups in 3-sn-phosphoglycerides. This chain is Acidic phospholipase A2 MVL-PLA2, found in Macrovipera lebetina transmediterranea (Blunt-nosed viper).